The chain runs to 226 residues: MALTDIDVQKQIKHMMAFIEQEANEKAEEIDAKAEEEFNIEKGRLVQTQRLKIMDYFEKKEKQIEQQKKIQLSTMRNQARITVLRARDNLILELLKDAKMRLSRIVSDEEIYQDLLDKLVLQALLRLLEPVMIVRCRPQDLHLVESAVLRAIPQYMRLCQKHLEVQVDQTEHLPSNAAGGVEVYSSDQKIKVSNTLESRLNLAAMQKMPEIRGILFGDNTSRKFFT.

The protein belongs to the V-ATPase E subunit family. V-ATPase is a heteromultimeric enzyme made up of two complexes: the ATP-hydrolytic V1 complex and the proton translocation V0 complex. The V1 complex consists of three catalytic AB heterodimers that form a heterohexamer, three peripheral stalks each consisting of EG heterodimers, one central rotor including subunits D and F, and the regulatory subunits C and H. The proton translocation complex V0 consists of the proton transport subunit a, a ring of proteolipid subunits c9c'', rotary subunit d, subunits e and f, and the accessory subunits ATP6AP1/Ac45 and ATP6AP2/PRR. In terms of tissue distribution, testis specific.

Functionally, subunit of the V1 complex of vacuolar(H+)-ATPase (V-ATPase), a multisubunit enzyme composed of a peripheral complex (V1) that hydrolyzes ATP and a membrane integral complex (V0) that translocates protons. V-ATPase is responsible for acidifying and maintaining the pH of intracellular compartments and in some cell types, is targeted to the plasma membrane, where it is responsible for acidifying the extracellular environment. In Mus musculus (Mouse), this protein is V-type proton ATPase subunit E 2 (Atp6v1e2).